The sequence spans 507 residues: Peroxisomal catalase (507 aa).

Catalysis depends on residues H65 and N138. Y348 is a binding site for heme. Residues 505–507 carry the Microbody targeting signal motif; it reads SKI.

Belongs to the catalase family. Homotetramer. Requires heme as cofactor.

It is found in the peroxisome matrix. The catalysed reaction is 2 H2O2 = O2 + 2 H2O. Catalyzes the degradation of hydrogen peroxide (H(2)O(2)) generated by peroxisomal oxidases to water and oxygen, thereby protecting cells from the toxic effects of hydrogen peroxide. This Pichia angusta (Yeast) protein is Peroxisomal catalase (PXP9).